Reading from the N-terminus, the 3660-residue chain is Dystrophin (3660 aa).

The interval 1–244 (MSAHVLWYEE…YVTSLFQVLP (244 aa)) is actin-binding. 2 Calponin-homology (CH) domains span residues 19–123 (DVQK…LHWQ) and 138–244 (TNSE…QVLP). 22 Spectrin repeats span residues 341-449 (MDLD…NLHK), 450-558 (ILMD…LLQD), 561-669 (RKWQ…QVSQ), 721-830 (EIRK…WLEY), 832-936 (NSII…QLQT), 945-1047 (RYKD…KLED), 1050-1156 (TKLQ…ALKG), 1159-1265 (DKTV…TLEE), 1268-1369 (ACWH…SLEQ), 1470-1570 (EQRL…ELEK), 1573-1678 (KLSR…LLME), 1681-1782 (KHME…FIPL), 1879-1981 (HQWY…TVLE), 2013-2103 (LSEV…RFDK), 2106-2211 (EKWR…RIEE), 2214-2321 (NILS…EIEI), 2472-2574 (FNKA…QLHE), 2577-2683 (KDST…ALES), 2686-2799 (LMLQ…HLEA), 2802-2904 (DQWK…LRRQ), 2906-2928 (DDVRTEWDKLNLRSADWQKKIDD), and 2931-3037 (ERLQ…QLHE). The WW domain maps to 3052–3085 (TSVQGPWERAISPNKVPYYINHETQTTCWDHPKM). A ZZ-type; degenerate zinc finger spans residues 3305–3361 (KHQAKCNICKECPIIGFRYRSLKHFNYDICQSCFFSGRVAKGHKMHYPMVEYCTPTT). Residues cysteine 3310, cysteine 3313, cysteine 3334, and cysteine 3337 each coordinate Zn(2+). Disordered stretches follow at residues 3503-3526 (KQQHDHKGLSPLPSPPEMMPVSPQ) and 3575-3660 (PQAD…EATM). 2 stretches are compositionally biased toward polar residues: residues 3582–3601 (NGTTLSSPSTSLQRSDSSQP) and 3637–3647 (QLNNSFPSSRG).

Its subcellular location is the cell membrane. The protein resides in the sarcolemma. It localises to the cytoplasm. It is found in the cytoskeleton. The protein localises to the postsynaptic cell membrane. May play a role in anchoring the cytoskeleton to the plasma membrane. The protein is Dystrophin (DMD) of Gallus gallus (Chicken).